A 145-amino-acid chain; its full sequence is uncharacterized protein (145 aa).

The span at M1 to E18 shows a compositional bias: basic and acidic residues. Residues M1–D61 are disordered.

This is an uncharacterized protein from Caenorhabditis elegans.